We begin with the raw amino-acid sequence, 152 residues long: Snaclec agkisacutacin subunit A (152 aa).

A signal peptide spans M1 to A23. One can recognise a C-type lectin domain in the interval D24–A152. 3 cysteine pairs are disulfide-bonded: C25–C36, C53–C150, and C125–C142. Positions 64, 66, and 70 each coordinate Ca(2+). E151 contributes to the Ca(2+) binding site.

It belongs to the snaclec family. As to quaternary structure, heterodimer with subunit B of AaACP or agkisacutacin; disulfide-linked. In terms of tissue distribution, expressed by the venom gland.

The protein resides in the secreted. Anticoagulant protein which binds to the gamma-carboxyglutamic acid-domain regions of factors IX (F9) and factor X (F10) in the presence of calcium with a 1 to 1 stoichiometry. Also inhibits platelet aggregation by binding to platelet glycoprotein Ibalpha (GP1BA) and functioning as a blocker of von Willebrand factor (VWF). Is devoid of hemorrhagic and lethal activities. Possesses antithrombotic and thrombolytic activities. Also hydrolyzes the Aalpha-chain of fibrinogen (FGA). Does not affect the Bbeta-chain (FGB) and the gamma chain (FGG). The sequence is that of Snaclec agkisacutacin subunit A from Deinagkistrodon acutus (Hundred-pace snake).